The following is a 331-amino-acid chain: Trans-O-hydroxybenzylidenepyruvate hydratase-aldolase (331 aa).

The protein belongs to the DapA family.

The enzyme catalyses (3E)-4-(2-hydroxyphenyl)-2-oxobut-3-enoate + H2O = salicylaldehyde + pyruvate. The protein operates within aromatic compound metabolism; naphthalene degradation. Its function is as follows. Involved in the naphthalene upper catabolic pathway. Catalyzes the transformation of trans-O-hydroxybenzylidenepyruvate (THBPA) to salicylaldehyde and pyruvate. The reaction is reversible. Can also use substrate which carry trans-alpha,beta-unsaturated keto acid side chain and adjacent hydroxyl group such as trans-4-(3-hydroxy-2-thianaphthenyl)-2-oxo-but-3-enoate, trans-4-(3-hydroxy-2-benzofuranyl)-2-oxobut-3-enoate, and trans-4-(3-hydroxy-2-thienyl)-2-oxobut-3-enoate. The polypeptide is Trans-O-hydroxybenzylidenepyruvate hydratase-aldolase (nahE) (Pseudomonas putida (Arthrobacter siderocapsulatus)).